Consider the following 270-residue polypeptide: Photosystem I chlorophyll a/b-binding protein 6, chloroplastic (270 aa).

The transit peptide at 1–33 (MAFAIASALTSTLTLSTSRVQNPTQRRPHVAST) directs the protein to the chloroplast. Positions 16–36 (STSRVQNPTQRRPHVASTSST) are disordered. Positions 19–36 (RVQNPTQRRPHVASTSST) are enriched in polar residues. Trp-68 is a chlorophyll b binding site. The chlorophyll a site is built by Phe-88 and Glu-107. Arg-112 serves as a coordination point for chlorophyll b. The chain crosses the membrane as a helical span at residues 146 to 164 (YFADSTTLFVAQMVLMGWA). The chlorophyll b site is built by Glu-165 and Arg-168. Chlorophyll a contacts are provided by Lys-221, Glu-222, Asn-225, Arg-227, Gln-239, and His-254. The chain crosses the membrane as a helical span at residues 228 to 244 (LAMLAFLGFCFQATYTS).

It belongs to the light-harvesting chlorophyll a/b-binding (LHC) protein family. In terms of assembly, the LHC complex consists of chlorophyll a-b binding proteins. Homodimer. Binds pigments. Element of the NAD(P)H dehydrogenase-photosystem I supercomplex (NDH-PSI). Requires Binds at least 14 chlorophylls (8 Chl-a and 6 Chl-b) and carotenoids such as lutein and neoxanthin. as cofactor. Photoregulated by reversible phosphorylation of its threonine residues.

It localises to the plastid. It is found in the chloroplast thylakoid membrane. In terms of biological role, the light-harvesting complex (LHC) functions as a light receptor, it captures and delivers excitation energy to photosystems with which it is closely associated. Seems involved in the function of the photosystem I in low light conditions, when other LHCA proteins are less abundant. Required, together with LHCA5, for the formation of a full-size NAD(P)H dehydrogenase-photosystem I supercomplex (NDH-PSI) that triggers cyclic and chlororespiratory electron transport in chloroplast thylakoids, especially under stress conditions (e.g. increased light intensity). This chain is Photosystem I chlorophyll a/b-binding protein 6, chloroplastic, found in Arabidopsis thaliana (Mouse-ear cress).